The chain runs to 514 residues: 2,3-bisphosphoglycerate-independent phosphoglycerate mutase (514 aa).

Residues Asp14 and Ser64 each contribute to the Mn(2+) site. Ser64 serves as the catalytic Phosphoserine intermediate. Residues His125, 155–156 (RD), Arg187, Arg193, 263–266 (RADR), and Lys337 each bind substrate. 5 residues coordinate Mn(2+): Asp404, His408, Asp445, His446, and His464.

It belongs to the BPG-independent phosphoglycerate mutase family. As to quaternary structure, monomer. Mn(2+) is required as a cofactor.

The enzyme catalyses (2R)-2-phosphoglycerate = (2R)-3-phosphoglycerate. The protein operates within carbohydrate degradation; glycolysis; pyruvate from D-glyceraldehyde 3-phosphate: step 3/5. Functionally, catalyzes the interconversion of 2-phosphoglycerate and 3-phosphoglycerate. This is 2,3-bisphosphoglycerate-independent phosphoglycerate mutase from Pseudoalteromonas translucida (strain TAC 125).